Consider the following 611-residue polypeptide: Protein Pixie (611 aa).

2 consecutive 4Fe-4S ferredoxin-type domains span residues 15-45 (RIAI…MGKL) and 54-83 (KIAS…IINL). ABC transporter domains follow at residues 78–323 (ITII…FLDG) and 350–570 (IKRM…LELL). Residues 118–125 (GQNGIGKS) and 387–394 (GENGTGKT) each bind ATP.

It belongs to the ABC transporter superfamily. ABCE family. Interacts with components of eIF3 complex, namely eIF3a, eIF3j, eIF3b, eIF3c and eIF3i. Associates with the 40S ribosome subunit in an ATP-dependent manner and independently from the presence of the eIF3 complex. Forms a complex with Git and Pak; the interaction with Pak may be mediated by pix/dPIX. Post-translationally, ubiquitinated by Cnot4. Ubiquitination mediates the recruitment of autophagy receptors to the mitochondrial outer membrane and initiates mitophagy. As to expression, expressed in early and late larval imaginal disks (at protein level).

It is found in the cytoplasm. Plays a role in translation initiation and quality control of translation. Together with pelo and HBS1, is required for 48S complex formation from 80S ribosomes and dissociation of vacant 80S ribosomes. Stabilizes core components of eIF3 complex promoting their assembly into translation initiation-competent complexes. Together with pelo and HBS1, recognizes stalled ribosomes and promotes dissociation of elongation complexes assembled on non-stop mRNAs; this triggers endonucleolytic cleavage of the mRNA, a mechanism to release non-functional ribosomes and to degrade damaged mRNAs as part of the No-Go Decay (NGD) pathway. Plays a role in the regulation of mRNA turnover. Plays a role in quality control of translation of mitochondrial outer membrane-localized mRNA. As part of the Pink1-regulated signaling, ubiquitinated by Cnot4 upon mitochondria damage; this modification generates polyubiquitin signals that recruits autophagy receptors to the mitochondrial outer membrane to initiate mitophagy. Required in the wing disk for cell division and growth as well as cell survival. During muscle embryogenesis, required for the recruitment of Pak to muscle attachments in the embryo, hence may play a role in proper muscle morphogenesis and proper guidance and targeting of subsets of myotubes. The chain is Protein Pixie from Drosophila melanogaster (Fruit fly).